A 430-amino-acid chain; its full sequence is Long-chain specific acyl-CoA dehydrogenase, mitochondrial (430 aa).

The N-terminal 30 residues, 1 to 30, are a transit peptide targeting the mitochondrion; it reads MAARLLRGSLRFLGGHCAARPLPALRCSHS. An N6-acetyllysine modification is found at Lys-42. Residues Ser-54 and Ser-55 each carry the phosphoserine modification. N6-acetyllysine; alternate occurs at positions 66 and 81. N6-succinyllysine; alternate is present on residues Lys-66 and Lys-81. N6-acetyllysine occurs at positions 92 and 95. Position 165 is an N6-succinyllysine (Lys-165). Residues 170-179 and 203-205 contribute to the FAD site; these read IAMTELGAGS and FIS. Ser-179 contacts substrate. Substrate is bound at residue 227-228; the sequence is AR. Lys-240 bears the N6-succinyllysine mark. 2 positions are modified to N6-acetyllysine; alternate: Lys-254 and Lys-279. N6-succinyllysine; alternate occurs at positions 254 and 279. Substrate is bound by residues Tyr-282 and 289 to 292; that span reads PQER. The Proton acceptor role is filled by Glu-291. Arg-317 is an FAD binding site. Residue Lys-318 is modified to N6-acetyllysine. Lys-322 is subject to N6-acetyllysine; alternate. The residue at position 322 (Lys-322) is an N6-succinyllysine; alternate. Gln-328 is a binding site for FAD. The residue at position 358 (Lys-358) is an N6-acetyllysine. Position 362 is a phosphoserine (Ser-362). 385–389 serves as a coordination point for FAD; it reads QLHGG. Residue 412 to 413 coordinates substrate; that stretch reads GG. Position 414-416 (414-416) interacts with FAD; the sequence is TNE.

Belongs to the acyl-CoA dehydrogenase family. As to quaternary structure, homotetramer. FAD serves as cofactor. In terms of processing, acetylation at Lys-318 and Lys-322 in proximity of the cofactor-binding sites strongly reduces catalytic activity. These sites are deacetylated by SIRT3.

The protein resides in the mitochondrion matrix. The catalysed reaction is a long-chain 2,3-saturated fatty acyl-CoA + oxidized [electron-transfer flavoprotein] + H(+) = a long-chain (2E)-enoyl-CoA + reduced [electron-transfer flavoprotein]. It carries out the reaction hexanoyl-CoA + oxidized [electron-transfer flavoprotein] + H(+) = (2E)-hexenoyl-CoA + reduced [electron-transfer flavoprotein]. The enzyme catalyses octanoyl-CoA + oxidized [electron-transfer flavoprotein] + H(+) = (2E)-octenoyl-CoA + reduced [electron-transfer flavoprotein]. It catalyses the reaction decanoyl-CoA + oxidized [electron-transfer flavoprotein] + H(+) = (2E)-decenoyl-CoA + reduced [electron-transfer flavoprotein]. The catalysed reaction is dodecanoyl-CoA + oxidized [electron-transfer flavoprotein] + H(+) = (2E)-dodecenoyl-CoA + reduced [electron-transfer flavoprotein]. It carries out the reaction tetradecanoyl-CoA + oxidized [electron-transfer flavoprotein] + H(+) = (2E)-tetradecenoyl-CoA + reduced [electron-transfer flavoprotein]. The enzyme catalyses oxidized [electron-transfer flavoprotein] + hexadecanoyl-CoA + H(+) = (2E)-hexadecenoyl-CoA + reduced [electron-transfer flavoprotein]. It catalyses the reaction octadecanoyl-CoA + oxidized [electron-transfer flavoprotein] + H(+) = (2E)-octadecenoyl-CoA + reduced [electron-transfer flavoprotein]. The catalysed reaction is eicosanoyl-CoA + oxidized [electron-transfer flavoprotein] + H(+) = (2E)-eicosenoyl-CoA + reduced [electron-transfer flavoprotein]. It carries out the reaction docosanoyl-CoA + oxidized [electron-transfer flavoprotein] + H(+) = (2E)-docosenoyl-CoA + reduced [electron-transfer flavoprotein]. The enzyme catalyses tetracosanoyl-CoA + oxidized [electron-transfer flavoprotein] + H(+) = (2E)-tetracosenoyl-CoA + reduced [electron-transfer flavoprotein]. It catalyses the reaction (5E)-tetradecenoyl-CoA + oxidized [electron-transfer flavoprotein] + H(+) = (2E,5E)-tetradecadienoyl-CoA + reduced [electron-transfer flavoprotein]. The catalysed reaction is (5Z)-tetradecenoyl-CoA + oxidized [electron-transfer flavoprotein] + H(+) = (2E,5Z)-tetradecadienoyl-CoA + reduced [electron-transfer flavoprotein]. It carries out the reaction oxidized [electron-transfer flavoprotein] + (9Z)-octadecenoyl-CoA + H(+) = (2E,9Z)-octadecadienoyl-CoA + reduced [electron-transfer flavoprotein]. The protein operates within lipid metabolism; mitochondrial fatty acid beta-oxidation. In terms of biological role, long-chain specific acyl-CoA dehydrogenase is one of the acyl-CoA dehydrogenases that catalyze the first step of mitochondrial fatty acid beta-oxidation, an aerobic process breaking down fatty acids into acetyl-CoA and allowing the production of energy from fats. The first step of fatty acid beta-oxidation consists in the removal of one hydrogen from C-2 and C-3 of the straight-chain fatty acyl-CoA thioester, resulting in the formation of trans-2-enoyl-CoA. Among the different mitochondrial acyl-CoA dehydrogenases, long-chain specific acyl-CoA dehydrogenase can act on saturated and unsaturated acyl-CoAs with 6 to 24 carbons with a preference for 8 to 18 carbons long primary chains. The polypeptide is Long-chain specific acyl-CoA dehydrogenase, mitochondrial (Macaca fascicularis (Crab-eating macaque)).